The sequence spans 197 residues: FMN-dependent NADH:quinone oxidoreductase (197 aa).

Residues Ser-10 and 17 to 19 (SFS) contribute to the FMN site.

Belongs to the azoreductase type 1 family. As to quaternary structure, homodimer. Requires FMN as cofactor.

It carries out the reaction 2 a quinone + NADH + H(+) = 2 a 1,4-benzosemiquinone + NAD(+). The enzyme catalyses N,N-dimethyl-1,4-phenylenediamine + anthranilate + 2 NAD(+) = 2-(4-dimethylaminophenyl)diazenylbenzoate + 2 NADH + 2 H(+). Its function is as follows. Quinone reductase that provides resistance to thiol-specific stress caused by electrophilic quinones. In terms of biological role, also exhibits azoreductase activity. Catalyzes the reductive cleavage of the azo bond in aromatic azo compounds to the corresponding amines. The sequence is that of FMN-dependent NADH:quinone oxidoreductase from Mycoplasmoides gallisepticum (strain R(low / passage 15 / clone 2)) (Mycoplasma gallisepticum).